We begin with the raw amino-acid sequence, 83 residues long: Toxin To12 (83 aa).

A signal peptide spans 1-19; that stretch reads MKGLILFICGFMMIGVILA. An LCN-type CS-alpha/beta domain is found at 20-82; the sequence is KEGYPMDHEG…VWDYYNNKCG (63 aa). 4 cysteine pairs are disulfide-bonded: Cys30–Cys81, Cys34–Cys57, Cys42–Cys62, and Cys46–Cys64. At Cys81 the chain carries Cysteine amide.

Belongs to the long (4 C-C) scorpion toxin superfamily. Sodium channel inhibitor family. Beta subfamily. In terms of tissue distribution, expressed by the venom gland.

The protein resides in the secreted. Functionally, beta toxins bind voltage-independently at site-4 of sodium channels (Nav) and shift the voltage of activation toward more negative potentials thereby affecting sodium channel activation and promoting spontaneous and repetitive firing. The sequence is that of Toxin To12 from Tityus obscurus (Amazonian scorpion).